The primary structure comprises 140 residues: Small ribosomal subunit protein uS11 (140 aa).

Residues 116 to 140 (GRVEDVTPIPHDGTRPKGGRRGRRV) are disordered.

It belongs to the universal ribosomal protein uS11 family. In terms of assembly, part of the 30S ribosomal subunit.

In terms of biological role, located on the platform of the 30S subunit. In Thermococcus kodakarensis (strain ATCC BAA-918 / JCM 12380 / KOD1) (Pyrococcus kodakaraensis (strain KOD1)), this protein is Small ribosomal subunit protein uS11.